Reading from the N-terminus, the 211-residue chain is Bacteriorhodopsin (211 aa).

The chain crosses the membrane as a helical span at residues 1-19; the sequence is IWLWLGTAGMFLGMLYFIA. The Cytoplasmic segment spans residues 20-33; it reads RGWGETDSRRQKFY. A helical transmembrane segment spans residues 34-52; it reads IATILITAIAFVNYLAMAL. Residues 53–68 are Extracellular-facing; it reads GFGLTIVEFAGEEHPI. Residues 69-86 traverse the membrane as a helical segment; that stretch reads YWARYSDWLFTTPLLLYD. The Cytoplasmic segment spans residues 87-97; that stretch reads LGLLAGADRNT. A helical membrane pass occupies residues 98–117; that stretch reads ITSLVSLDVLMIGTGLVATL. The Extracellular segment spans residues 118–130; sequence SAGSGVLSAGAER. Residues 131–150 traverse the membrane as a helical segment; the sequence is LVWWGISTAFLLVLLYFLFS. Residues 151–168 lie on the Cytoplasmic side of the membrane; sequence SLSGRVADLPSDTRSTFK. The chain crosses the membrane as a helical span at residues 169–187; sequence TLRNLVTVVWLVYPVWWLI. Residues 188 to 199 are Extracellular-facing; that stretch reads GTEGIGLVGIGI. A helical membrane pass occupies residues 200 to 211; the sequence is ETAGFMVIDLTA.

Belongs to the archaeal/bacterial/fungal opsin family.

The protein localises to the cell membrane. Light-driven proton pump. This is Bacteriorhodopsin (bop) from Halobacterium halobium (strain port).